The chain runs to 214 residues: MELAVKTLAGDAAGNIDLDDAIFGIDEIRGDILQRTVRWQLARRQAGTHKAKSRSEVNRTTKKSIKQKGSGGARHGSRNAPIFVGGGIAHGPRVRSHAHDLPKKIRKMALAHALSSKAKDSSIMVIDTCELDSPKTKGLIQAFKDLGIENALIISGTEVNENFARAARNIPNIDVLPVAGLNVYDILRRRTLVITKEAAEGIKARFDGAKAEAE.

Residues 43 to 83 form a disordered region; sequence RRQAGTHKAKSRSEVNRTTKKSIKQKGSGGARHGSRNAPIF.

The protein belongs to the universal ribosomal protein uL4 family. As to quaternary structure, part of the 50S ribosomal subunit.

One of the primary rRNA binding proteins, this protein initially binds near the 5'-end of the 23S rRNA. It is important during the early stages of 50S assembly. It makes multiple contacts with different domains of the 23S rRNA in the assembled 50S subunit and ribosome. Functionally, forms part of the polypeptide exit tunnel. The protein is Large ribosomal subunit protein uL4 of Hyphomonas neptunium (strain ATCC 15444).